Here is a 503-residue protein sequence, read N- to C-terminus: Cytochrome P450 71B6 (503 aa).

Residues 10–30 (TELLPWLLLLLIPPLLIFFLL) traverse the membrane as a helical segment. Cysteine 446 contacts heme.

This sequence belongs to the cytochrome P450 family. Heme serves as cofactor.

It is found in the membrane. This is Cytochrome P450 71B6 (CYP71B6) from Arabidopsis thaliana (Mouse-ear cress).